The sequence spans 255 residues: Imidazole glycerol phosphate synthase subunit HisF (255 aa).

Residues aspartate 11 and aspartate 130 contribute to the active site.

This sequence belongs to the HisA/HisF family. As to quaternary structure, heterodimer of HisH and HisF.

The protein localises to the cytoplasm. The enzyme catalyses 5-[(5-phospho-1-deoxy-D-ribulos-1-ylimino)methylamino]-1-(5-phospho-beta-D-ribosyl)imidazole-4-carboxamide + L-glutamine = D-erythro-1-(imidazol-4-yl)glycerol 3-phosphate + 5-amino-1-(5-phospho-beta-D-ribosyl)imidazole-4-carboxamide + L-glutamate + H(+). It functions in the pathway amino-acid biosynthesis; L-histidine biosynthesis; L-histidine from 5-phospho-alpha-D-ribose 1-diphosphate: step 5/9. In terms of biological role, IGPS catalyzes the conversion of PRFAR and glutamine to IGP, AICAR and glutamate. The HisF subunit catalyzes the cyclization activity that produces IGP and AICAR from PRFAR using the ammonia provided by the HisH subunit. This is Imidazole glycerol phosphate synthase subunit HisF from Synechococcus sp. (strain ATCC 27144 / PCC 6301 / SAUG 1402/1) (Anacystis nidulans).